The chain runs to 377 residues: Probable staphylococcal-like nuclease CAN3 (377 aa).

G2 carries N-myristoyl glycine lipidation. C7 is lipidated: S-palmitoyl cysteine. Residues 15–57 form a disordered region; the sequence is GDHYPYYKPTSRPHYQPPHYHGQPAAPPAPPQQQPLGPHGVTP. The segment covering 27-38 has biased composition (low complexity); the sequence is PHYQPPHYHGQP. The region spanning 177-353 is the TNase-like domain; sequence NTLPVYDKCI…KAANRGLWAS (177 aa). D190 lines the Ca(2+) pocket. The active site involves R260. D265 is a binding site for Ca(2+). Residues E268 and R302 contribute to the active site.

It belongs to the thermonuclease family. Ca(2+) serves as cofactor.

Its subcellular location is the cell membrane. Functionally, enzyme that catalyzes the hydrolysis of both DNA and RNA at the 5' position of the phosphodiester bond. This Oryza sativa subsp. japonica (Rice) protein is Probable staphylococcal-like nuclease CAN3.